A 250-amino-acid polypeptide reads, in one-letter code: MNFTVIIPARYASSRLPRKPLLDIAGKPMIQHVWEKAQQAGATRVIIATDHPEIEATAKAFGAEVCMTSDQHNSGTERLAEVIEKMQIADNEIIVNVQGDEPLIPPVIVSQVAENLDRCQVNMATLAVKLTTKEELFNPNAVKALADKNGMALYFSRAPIPFARDHFADCDDAFVASQNYLRHIGIYAYRAGFVKQYVAWQPTQLEQLESLEQLRALWYGEKIHIELAKQAPQVGVDTQEDLERVRRILA.

The protein belongs to the KdsB family.

The protein resides in the cytoplasm. The enzyme catalyses 3-deoxy-alpha-D-manno-oct-2-ulosonate + CTP = CMP-3-deoxy-beta-D-manno-octulosonate + diphosphate. The protein operates within nucleotide-sugar biosynthesis; CMP-3-deoxy-D-manno-octulosonate biosynthesis; CMP-3-deoxy-D-manno-octulosonate from 3-deoxy-D-manno-octulosonate and CTP: step 1/1. It functions in the pathway bacterial outer membrane biogenesis; lipopolysaccharide biosynthesis. Its function is as follows. Activates KDO (a required 8-carbon sugar) for incorporation into bacterial lipopolysaccharide in Gram-negative bacteria. The protein is 3-deoxy-manno-octulosonate cytidylyltransferase of Actinobacillus pleuropneumoniae serotype 7 (strain AP76).